Here is a 218-residue protein sequence, read N- to C-terminus: Cytochrome b6 (218 aa).

Residues 35–55 (IFYCLGGITLVCFLIQFATGF) form a helical membrane-spanning segment. C38 serves as a coordination point for heme c. Positions 89 and 103 each coordinate heme b. 3 helical membrane-spanning segments follow: residues 93 to 113 (ASMMVLMLILHVFRVYLTGGF), 119 to 139 (LTWVTGVTMAVITVSFGVTGY), and 189 to 209 (LHTFVMPWLLAVFMLMHFLMI). Positions 190 and 205 each coordinate heme b.

It belongs to the cytochrome b family. PetB subfamily. As to quaternary structure, the 4 large subunits of the cytochrome b6-f complex are cytochrome b6, subunit IV (17 kDa polypeptide, PetD), cytochrome f and the Rieske protein, while the 4 small subunits are PetG, PetL, PetM and PetN. The complex functions as a dimer. It depends on heme b as a cofactor. The cofactor is heme c.

It is found in the cellular thylakoid membrane. In terms of biological role, component of the cytochrome b6-f complex, which mediates electron transfer between photosystem II (PSII) and photosystem I (PSI), cyclic electron flow around PSI, and state transitions. The polypeptide is Cytochrome b6 (Synechococcus sp. (strain CC9902)).